The following is a 91-amino-acid chain: Long neurotoxin OH-57 (91 aa).

The N-terminal stretch at 1-21 (MKTLLLTLVVVTIVCLDLGYT) is a signal peptide. Disulfide bonds link C24-C41, C34-C62, C47-C51, C66-C77, and C78-C83.

The protein belongs to the three-finger toxin family. Long-chain subfamily. Type II alpha-neurotoxin sub-subfamily. Expressed by the venom gland.

It is found in the secreted. In terms of biological role, binds with high affinity to muscular (alpha-1/CHRNA1) and neuronal (alpha-7/CHRNA7) nicotinic acetylcholine receptor (nAChR) and inhibits acetylcholine from binding to the receptor, thereby impairing neuromuscular and neuronal transmission. The polypeptide is Long neurotoxin OH-57 (Ophiophagus hannah (King cobra)).